We begin with the raw amino-acid sequence, 242 residues long: Platinum sensitivity protein 3 (242 aa).

Component of the SHU complex composed of at least CSM2, PSY3, SHU1 and SHU2.

Its subcellular location is the nucleus. Required for resistance to the DNA-damaging agents methyl methanesulfonate (MMS), cisplatin and oxaliplatin, but not to mitomycin C. Plays a role in protection against mutation accumulation. May be a component of the recombination-repair pathway. The chain is Platinum sensitivity protein 3 (PSY3) from Saccharomyces cerevisiae (strain ATCC 204508 / S288c) (Baker's yeast).